We begin with the raw amino-acid sequence, 140 residues long: Ribosome maturation factor RimP (140 aa).

The protein belongs to the RimP family.

It localises to the cytoplasm. Required for maturation of 30S ribosomal subunits. This is Ribosome maturation factor RimP from Campylobacter lari (strain RM2100 / D67 / ATCC BAA-1060).